The primary structure comprises 376 residues: TraB domain-containing protein (376 aa).

Methionine 1 carries the N-acetylmethionine modification. Positions 1-34 (MDGEEQQPPHEANVEPVVPSEASEPVPRVLSGDP) are disordered. The segment covering 14–27 (VEPVVPSEASEPVP) has biased composition (low complexity). Threonine 65 bears the Phosphothreonine mark.

This is TraB domain-containing protein (TRABD) from Homo sapiens (Human).